Reading from the N-terminus, the 909-residue chain is Phosphoenolpyruvate carboxylase (909 aa).

Residues His151 and Lys578 contribute to the active site.

It belongs to the PEPCase type 1 family. Mg(2+) is required as a cofactor.

The catalysed reaction is oxaloacetate + phosphate = phosphoenolpyruvate + hydrogencarbonate. Its function is as follows. Forms oxaloacetate, a four-carbon dicarboxylic acid source for the tricarboxylic acid cycle. This Caulobacter vibrioides (strain ATCC 19089 / CIP 103742 / CB 15) (Caulobacter crescentus) protein is Phosphoenolpyruvate carboxylase.